Consider the following 147-residue polypeptide: Receptor activity-modifying protein 3 (147 aa).

Positions 1-22 (MATPAQRLHLLPLLLLLCGECA) are cleaved as a signal peptide. Residues 23–112 (QVCGCNETGM…CTVDRTHWED (90 aa)) lie on the Extracellular side of the membrane. N-linked (GlcNAc...) asparagine glycans are attached at residues Asn-28, Asn-57, Asn-70, and Asn-102. 2 disulfides stabilise this stretch: Cys-39-Cys-71 and Cys-56-Cys-103. The helical transmembrane segment at 113-137 (PPDEVLIPLIAVPVLLTVAMAGLVV) threads the bilayer. Residues 138-147 (WRSKRTDRLL) lie on the Cytoplasmic side of the membrane.

It belongs to the RAMP family. Heterodimer of CALCRL and RAMP3; interaction induces allosteric modulation of CALCRL function and ligand specificity for adrenomedullin/ADM and intermedin/ADM2. Heterodimer of CALCR and RAMP3; interaction form the receptor complex AMYR3 for amylin/IAPP. Interacts with GPER1.

It is found in the cell membrane. The protein resides in the membrane. Functionally, accessory protein that interacts with and modulates the function of G-protein coupled receptors including calcitonin gene-related peptide type 1 receptor (CALCRL), calcitonin receptor (CALCR) and G-protein coupled estrogen receptor 1 (GPER1). Required for the transport of CALCRL and GPER1 receptors to the plasma membrane. Plays a role in cardioprotection by reducing cardiac hypertrophy and perivascular fibrosis in a GPER1-dependent manner. Together with CALCRL, form a receptor complex for adrenomedullin/ADM and intermedin/ADM2. Together with CALCR, act as a receptor complex for amylin/IAPP. This Rattus norvegicus (Rat) protein is Receptor activity-modifying protein 3.